The primary structure comprises 182 residues: Spermatophorin SP23 (182 aa).

Residues 1–7 form the signal peptide; it reads MVASIAG. 3 disordered regions span residues 1 to 26, 56 to 79, and 104 to 136; these read MVAS…FQPY, FQTI…NSIE, and IVVN…PPTI. Pro residues predominate over residues 109–128; the sequence is APPPPPVIYQAPPPPPPPPI.

As to expression, spermatophore.

Its subcellular location is the secreted. Its function is as follows. Structural protein of a layer within the wall of the spermatophore produced probably by cell type 4 of the bean-shaped gland (BAG). Fixation in the spermatophore seems to require covalent cross-linking of spermatophorins. In Tenebrio molitor (Yellow mealworm beetle), this protein is Spermatophorin SP23 (SP23).